Reading from the N-terminus, the 720-residue chain is Putative fatty acid oxidation complex trifunctional enzyme (720 aa).

The tract at residues 1-384 is 3-hydroxyacyl-CoA dehydrogenase; that stretch reads MQNEIKKVCV…SWKYGPFELL (384 aa). The enoyl-CoA hydratase/isomerase stretch occupies residues 453 to 720; the sequence is FVITTKMNCL…TIEKLKAIVK (268 aa).

In the N-terminal section; belongs to the 3-hydroxyacyl-CoA dehydrogenase family. The protein in the C-terminal section; belongs to the enoyl-CoA hydratase/isomerase family.

It carries out the reaction a (3S)-3-hydroxyacyl-CoA + NAD(+) = a 3-oxoacyl-CoA + NADH + H(+). The enzyme catalyses a (3S)-3-hydroxyacyl-CoA = a (2E)-enoyl-CoA + H2O. The catalysed reaction is a 4-saturated-(3S)-3-hydroxyacyl-CoA = a (3E)-enoyl-CoA + H2O. It catalyses the reaction a (3Z)-enoyl-CoA = a 4-saturated (2E)-enoyl-CoA. It carries out the reaction a (3E)-enoyl-CoA = a 4-saturated (2E)-enoyl-CoA. This is Putative fatty acid oxidation complex trifunctional enzyme from Rickettsia felis (strain ATCC VR-1525 / URRWXCal2) (Rickettsia azadi).